The sequence spans 865 residues: Envelope glycoprotein gp160 (865 aa).

A signal peptide spans 1-20; sequence MRYTIITLGIIVIGIGIVLS. Topologically, residues 21–705 are extracellular; it reads KQWITVFYGI…SKWLNILKMG (685 aa). N35 carries an N-linked (GlcNAc...) asparagine; by host glycan. Cysteines 42 and 55 form a disulfide. N-linked (GlcNAc...) asparagine; by host glycosylation is found at N68, N117, N150, N165, N195, N198, N210, N252, N255, N266, N276, N282, N294, N306, N316, N373, N414, N451, N488, and N491. Intrachain disulfides connect C101–C218, C108–C209, C113–C166, C231–C261, and C241–C253. Residues 113 to 165 are V1; it reads CVELNSTRERATTPTTTPKSTGLPCVGPTSGENLQSCNASIIEREMEDEPASN. The tract at residues 166 to 209 is V2; sequence CTFAMAGYVRDQKKNYYSVVWNDAEIYCKNKTNSTSKECYMIHC. Positions 311 to 343 are V3; the sequence is CRRPGNKTVLPVTIMAGLVFHSQKYNMKLRQAW. The cysteines at positions 311 and 344 are disulfide-linked. A disulfide bridge connects residues C396 and C471. The segment at 403-444 is V4; that stretch reads CKMDWFLNYLNNKTWDAYHNFCSSKKKGHAPGPCVQRTYVAY. A V5 region spans residues 487-494; it reads KNRTNVTL. The fusion peptide stretch occupies residues 537–557; sequence VPFVLGFLGFLGAAGTAMGAA. The tract at residues 600–616 is immunosuppression; that stretch reads LNARVTALEKYLEDQAR. N645 and N661 each carry an N-linked (GlcNAc...) asparagine; by host glycan. Residues 650-675 adopt a coiled-coil conformation; it reads EWERQIADLESNITGQLVKAREQEEK. Residues 682-703 form an MPER; binding to GalCer region; it reads KLTSWSDFWSWFDFSKWLNILK. Residues 706–726 traverse the membrane as a helical segment; the sequence is FLVIVGIIGLRLLYTVYGCIV. Topologically, residues 727–865 are cytoplasmic; it reads RVRQGYVPLS…VRQGLEEILN (139 aa). Residues 732-735 carry the YXXL motif; contains endocytosis signal motif; that stretch reads YVPL. Residues 744–763 form a disordered region; the sequence is VGKGRPDNADEPGEGGDNSR.

As to quaternary structure, the mature envelope protein (Env) consists of a homotrimer of non-covalently associated gp120-gp41 heterodimers. The resulting complex protrudes from the virus surface as a spike. Interacts with host CD4 and CCR5. Gp120 also interacts with the C-type lectins CD209/DC-SIGN and CLEC4M/DC-SIGNR (collectively referred to as DC-SIGN(R)). The mature envelope protein (Env) consists of a homotrimer of non-covalently associated gp120-gp41 heterodimers. The resulting complex protrudes from the virus surface as a spike. In terms of processing, specific enzymatic cleavages in vivo yield mature proteins. Envelope glycoproteins are synthesized as an inactive precursor that is heavily N-glycosylated and processed likely by host cell furin in the Golgi to yield the mature SU and TM proteins. The cleavage site between SU and TM requires the minimal sequence [KR]-X-[KR]-R.

It localises to the virion membrane. The protein localises to the host cell membrane. The protein resides in the host endosome membrane. The surface protein gp120 (SU) attaches the virus to the host lymphoid cell by binding to the primary receptor CD4. This interaction induces a structural rearrangement creating a high affinity binding site for a chemokine coreceptor like CCR5. This peculiar 2 stage receptor-interaction strategy allows gp120 to maintain the highly conserved coreceptor-binding site in a cryptic conformation, protected from neutralizing antibodies. These changes are transmitted to the transmembrane protein gp41 and are thought to activate its fusogenic potential by unmasking its fusion peptide. Its function is as follows. Surface protein gp120 (SU) may target the virus to gut-associated lymphoid tissue (GALT) by binding host ITGA4/ITGB7 (alpha-4/beta-7 integrins), a complex that mediates T-cell migration to the GALT. Interaction between gp120 and ITGA4/ITGB7 would allow the virus to enter GALT early in the infection, infecting and killing most of GALT's resting CD4+ T-cells. This T-cell depletion is believed to be the major insult to the host immune system leading to AIDS. In terms of biological role, the surface protein gp120 is a ligand for CD209/DC-SIGN and CLEC4M/DC-SIGNR, which are respectively found on dendritic cells (DCs), and on endothelial cells of liver sinusoids and lymph node sinuses. These interactions allow capture of viral particles at mucosal surfaces by these cells and subsequent transmission to permissive cells. DCs are professional antigen presenting cells, critical for host immunity by inducing specific immune responses against a broad variety of pathogens. They act as sentinels in various tissues where they take up antigen, process it, and present it to T-cells following migration to lymphoid organs. SIV subverts the migration properties of dendritic cells to gain access to CD4+ T-cells in lymph nodes. Virus transmission to permissive T-cells occurs either in trans (without DCs infection, through viral capture and transmission), or in cis (following DCs productive infection, through the usual CD4-gp120 interaction), thereby inducing a robust infection. In trans infection, bound virions remain infectious over days and it is proposed that they are not degraded, but protected in non-lysosomal acidic organelles within the DCs close to the cell membrane thus contributing to the viral infectious potential during DCs' migration from the periphery to the lymphoid tissues. On arrival at lymphoid tissues, intact virions recycle back to DCs' cell surface allowing virus transmission to CD4+ T-cells. Virion capture also seems to lead to MHC-II-restricted viral antigen presentation, and probably to the activation of SIV-specific CD4+ cells. Functionally, the transmembrane protein gp41 (TM) acts as a class I viral fusion protein. Under the current model, the protein has at least 3 conformational states: pre-fusion native state, pre-hairpin intermediate state, and post-fusion hairpin state. During fusion of viral and target intracellular membranes, the coiled coil regions (heptad repeats) assume a trimer-of-hairpins structure, positioning the fusion peptide in close proximity to the C-terminal region of the ectodomain. The formation of this structure appears to drive apposition and subsequent fusion of viral and target cell membranes. Complete fusion occurs in host cell endosomes. The virus undergoes clathrin-dependent internalization long before endosomal fusion, thus minimizing the surface exposure of conserved viral epitopes during fusion and reducing the efficacy of inhibitors targeting these epitopes. Membranes fusion leads to delivery of the nucleocapsid into the cytoplasm. The envelope glycoprotein gp160 precursor down-modulates cell surface CD4 antigen by interacting with it in the endoplasmic reticulum and blocking its transport to the cell surface. Its function is as follows. The gp120-gp41 heterodimer allows rapid transcytosis of the virus through CD4 negative cells such as simple epithelial monolayers of the intestinal, rectal and endocervical epithelial barriers. Both gp120 and gp41 specifically recognize glycosphingolipids galactosyl-ceramide (GalCer) or 3' sulfo-galactosyl-ceramide (GalS) present in the lipid rafts structures of epithelial cells. Binding to these alternative receptors allows the rapid transcytosis of the virus through the epithelial cells. This transcytotic vesicle-mediated transport of virions from the apical side to the basolateral side of the epithelial cells does not involve infection of the cells themselves. This chain is Envelope glycoprotein gp160 (env), found in Simian immunodeficiency virus agm.vervet (isolate AGM TYO-1) (SIV-agm.ver).